Here is a 235-residue protein sequence, read N- to C-terminus: RNA-free ribonuclease P (235 aa).

It belongs to the HARP family.

It catalyses the reaction Endonucleolytic cleavage of RNA, removing 5'-extranucleotides from tRNA precursor.. RNA-free RNase P that catalyzes the removal of the 5'-leader sequence from pre-tRNA to produce the mature 5'-terminus. This Methanothrix thermoacetophila (strain DSM 6194 / JCM 14653 / NBRC 101360 / PT) (Methanosaeta thermophila) protein is RNA-free ribonuclease P.